Consider the following 623-residue polypeptide: Chaperone protein HtpG (623 aa).

The a; substrate-binding stretch occupies residues 1–336 (MSMKGQETRG…SNDLPLNVSR (336 aa)). The interval 337–551 (EILQDSRVTQ…ADEMSTQMAK (215 aa)) is b. Residues 552-623 (LFAAAGQEAP…IRRMNKLLSA (72 aa)) form a c region.

Belongs to the heat shock protein 90 family. Homodimer.

It localises to the cytoplasm. In terms of biological role, molecular chaperone. Has ATPase activity. In Serratia proteamaculans (strain 568), this protein is Chaperone protein HtpG.